Consider the following 251-residue polypeptide: Hydroxyacylglutathione hydrolase (251 aa).

Positions 53, 55, 57, 58, 110, 127, and 165 each coordinate Zn(2+).

The protein belongs to the metallo-beta-lactamase superfamily. Glyoxalase II family. As to quaternary structure, monomer. Zn(2+) is required as a cofactor.

It carries out the reaction an S-(2-hydroxyacyl)glutathione + H2O = a 2-hydroxy carboxylate + glutathione + H(+). It functions in the pathway secondary metabolite metabolism; methylglyoxal degradation; (R)-lactate from methylglyoxal: step 2/2. Its function is as follows. Thiolesterase that catalyzes the hydrolysis of S-D-lactoyl-glutathione to form glutathione and D-lactic acid. This is Hydroxyacylglutathione hydrolase from Shigella boydii serotype 18 (strain CDC 3083-94 / BS512).